Here is a 185-residue protein sequence, read N- to C-terminus: Ribosome-recycling factor (185 aa).

The disordered stretch occupies residues 136-161 (MDSLKTDEKKGEIGEDDRKRRETEVQ).

Belongs to the RRF family.

It is found in the cytoplasm. Functionally, responsible for the release of ribosomes from messenger RNA at the termination of protein biosynthesis. May increase the efficiency of translation by recycling ribosomes from one round of translation to another. This Rhizorhabdus wittichii (strain DSM 6014 / CCUG 31198 / JCM 15750 / NBRC 105917 / EY 4224 / RW1) (Sphingomonas wittichii) protein is Ribosome-recycling factor.